The following is a 417-amino-acid chain: Indole-3-pyruvate monooxygenase YUCCA6 (417 aa).

36–41 is a binding site for FAD; sequence GAGPSG. Residue 204 to 209 participates in NADP(+) binding; that stretch reads GCGNSG.

This sequence belongs to the FMO family. It depends on FAD as a cofactor. As to expression, highly expressed in roots but modestly expressed in the cauline leaves and flowers. Expressed in anthers.

The protein localises to the cytoplasm. It catalyses the reaction indole-3-pyruvate + NADPH + O2 + H(+) = (indol-3-yl)acetate + CO2 + NADP(+) + H2O. It functions in the pathway plant hormone metabolism; auxin biosynthesis. In terms of biological role, involved in auxin biosynthesis via the indole-3-pyruvic acid (IPA) pathway. Also able to convert in vitro phenyl pyruvate (PPA) to phenyl acetic acid (PAA). Required for the formation of floral organs and vascular tissues. Belongs to the set of redundant YUCCA genes probably responsible for auxin biosynthesis in shoots. This Arabidopsis thaliana (Mouse-ear cress) protein is Indole-3-pyruvate monooxygenase YUCCA6 (YUC6).